The chain runs to 167 residues: Endoribonuclease YbeY (167 aa).

The disordered stretch occupies residues 64 to 101 (GKPTNVLSWPSEERASEEPGMAPEPPEPGDPEDPEPLG). The span at 90 to 99 (EPGDPEDPEP) shows a compositional bias: acidic residues. 3 residues coordinate Zn(2+): His-131, His-135, and His-141.

Belongs to the endoribonuclease YbeY family. Zn(2+) is required as a cofactor.

The protein localises to the cytoplasm. Single strand-specific metallo-endoribonuclease involved in late-stage 70S ribosome quality control and in maturation of the 3' terminus of the 16S rRNA. The polypeptide is Endoribonuclease YbeY (Cereibacter sphaeroides (strain ATCC 17023 / DSM 158 / JCM 6121 / CCUG 31486 / LMG 2827 / NBRC 12203 / NCIMB 8253 / ATH 2.4.1.) (Rhodobacter sphaeroides)).